The following is a 429-amino-acid chain: 3-isopropylmalate dehydratase large subunit (429 aa).

Residues C303, C363, and C366 each coordinate [4Fe-4S] cluster.

It belongs to the aconitase/IPM isomerase family. LeuC type 2 subfamily. As to quaternary structure, heterodimer of LeuC and LeuD. [4Fe-4S] cluster is required as a cofactor.

The catalysed reaction is (2R,3S)-3-isopropylmalate = (2S)-2-isopropylmalate. The protein operates within amino-acid biosynthesis; L-leucine biosynthesis; L-leucine from 3-methyl-2-oxobutanoate: step 2/4. Catalyzes the isomerization between 2-isopropylmalate and 3-isopropylmalate, via the formation of 2-isopropylmaleate. In Caldicellulosiruptor bescii (strain ATCC BAA-1888 / DSM 6725 / KCTC 15123 / Z-1320) (Anaerocellum thermophilum), this protein is 3-isopropylmalate dehydratase large subunit.